We begin with the raw amino-acid sequence, 133 residues long: Secreted effector protein SteB (133 aa).

It is found in the secreted. It localises to the host cytoplasm. Functionally, effector proteins function to alter host cell physiology and promote bacterial survival in host tissues. The protein is Secreted effector protein SteB (steB) of Salmonella typhimurium (strain 14028s / SGSC 2262).